The primary structure comprises 221 residues: Ribonuclease T (221 aa).

Residues 21–195 (VVVDVETAGF…YDAEKTADLF (175 aa)) enclose the Exonuclease domain. Mg(2+) is bound by residues D24, E26, H182, and D187. Residue H182 is the Proton donor/acceptor of the active site.

This sequence belongs to the RNase T family. In terms of assembly, homodimer. Mg(2+) serves as cofactor.

Trims short 3' overhangs of a variety of RNA species, leaving a one or two nucleotide 3' overhang. Responsible for the end-turnover of tRNA: specifically removes the terminal AMP residue from uncharged tRNA (tRNA-C-C-A). Also appears to be involved in tRNA biosynthesis. In Marinobacter nauticus (strain ATCC 700491 / DSM 11845 / VT8) (Marinobacter aquaeolei), this protein is Ribonuclease T.